A 374-amino-acid chain; its full sequence is Serine/threonine-protein kinase-transforming protein mos (374 aa).

The Protein kinase domain maps to 94–370 (VCLMHRLGSG…LLQRDLKAFR (277 aa)). ATP contacts are provided by residues 100-108 (LGSGGFGSV) and Lys-121. The active-site Proton acceptor is the Asp-229.

The protein belongs to the protein kinase superfamily. Ser/Thr protein kinase family.

The catalysed reaction is L-seryl-[protein] + ATP = O-phospho-L-seryl-[protein] + ADP + H(+). The enzyme catalyses L-threonyl-[protein] + ATP = O-phospho-L-threonyl-[protein] + ADP + H(+). The protein is Serine/threonine-protein kinase-transforming protein mos (V-MOS) of Mus musculus (Mouse).